Here is a 130-residue protein sequence, read N- to C-terminus: Small ribosomal subunit protein uS11c (130 aa).

Belongs to the universal ribosomal protein uS11 family. In terms of assembly, part of the 30S ribosomal subunit.

The protein resides in the plastid. It is found in the chloroplast. The protein is Small ribosomal subunit protein uS11c of Adiantum capillus-veneris (Maidenhair fern).